Here is a 1272-residue protein sequence, read N- to C-terminus: AF4/FMR2 family member 2 (1272 aa).

Disordered regions lie at residues 93-183 (IPKN…LTQD), 201-225 (QIGEAEESNPSAKEDSNPNSSGEDA), and 283-302 (AYVRPMDGQDQAPDISPTLK). Positions 97 to 107 (SVPQNPNNKNE) are enriched in polar residues. The span at 151-160 (SKPEWSRDSH) shows a compositional bias: basic and acidic residues. Residues 161 to 183 (NPSTVLASQASGQPNKMQTLTQD) show a composition bias toward polar residues. The residue at position 391 (Ser391) is a Phosphoserine. Disordered regions lie at residues 418–491 (KAKP…KWQL), 535–687 (TNAS…DQEE), 779–829 (SLHA…PEKK), and 842–903 (PPCI…QDKN). A compositionally biased stretch (pro residues) spans 426-438 (VNPPLATPQPPPA). Residues 439 to 452 (VQASGGSGSSSESE) are compositionally biased toward low complexity. Thr478 bears the Phosphothreonine mark. Over residues 543-558 (EPKERPLLSLIREKAR) the composition is skewed to basic and acidic residues. Residues 576–586 (STTSETVSQRT) show a composition bias toward polar residues. A compositionally biased stretch (basic and acidic residues) spans 616–629 (PKEKESVELHDPPR). Residues 630–640 (GRNKATAHKPA) show a composition bias toward basic residues. A compositionally biased stretch (basic and acidic residues) spans 818–829 (PTEVAEKIPEKK). Composition is skewed to pro residues over residues 844–853 (CISPAPPHKP) and 874–883 (FPPPLSPLPE).

It belongs to the AF4 family.

It is found in the nucleus speckle. RNA-binding protein. Might be involved in alternative splicing regulation through an interaction with G-quartet RNA structure. This Pan troglodytes (Chimpanzee) protein is AF4/FMR2 family member 2 (AFF2).